We begin with the raw amino-acid sequence, 74 residues long: MKLSCLLLTLAIIVVLTIVHAPNVEAKALADPESDAVGFADAVGEADPNAIIGLVSKGTCVLVKTVCKKVLKQG.

Residues 1–26 (MKLSCLLLTLAIIVVLTIVHAPNVEA) form the signal peptide. Positions 27-50 (KALADPESDAVGFADAVGEADPNA) are excised as a propeptide. Gln73 is modified (glutamine amide).

Belongs to the formicidae venom precursor-01 superfamily. Ant pilosulin family. Expressed by the venom gland.

The protein localises to the secreted. In terms of biological role, shows moderate activity against E.coli and S.aureus (MIC&lt;25 uM), slight activity against B.subtilis (MIC&lt;50 uM), and no activity against L.garvieae, P.aeruginosa, C.albicans, and S.cerevisiae. Has no hemolytic nor cytolytic activity. Causes an IgE-independent histamine release. The chain is M-myrmeciitoxin-Mb1a from Myrmecia banksi (Jack jumper ant).